Reading from the N-terminus, the 318-residue chain is Small ribosomal subunit biogenesis GTPase RsgA (318 aa).

Residues 1-16 (MTRGKPGRAGHDRRHA) show a composition bias toward basic residues. A disordered region spans residues 1–21 (MTRGKPGRAGHDRRHASTGEH). The 166-residue stretch at 84 to 249 (SDQFKSKQLA…LIDSPGFQEF (166 aa)) folds into the CP-type G domain. GTP-binding positions include 133–136 (NKID) and 187–195 (GQSGMGKSS). The Zn(2+) site is built by C273, C278, H280, and C286.

Belongs to the TRAFAC class YlqF/YawG GTPase family. RsgA subfamily. As to quaternary structure, monomer. Associates with 30S ribosomal subunit, binds 16S rRNA. Zn(2+) serves as cofactor.

It is found in the cytoplasm. One of several proteins that assist in the late maturation steps of the functional core of the 30S ribosomal subunit. Helps release RbfA from mature subunits. May play a role in the assembly of ribosomal proteins into the subunit. Circularly permuted GTPase that catalyzes slow GTP hydrolysis, GTPase activity is stimulated by the 30S ribosomal subunit. This is Small ribosomal subunit biogenesis GTPase RsgA from Ralstonia nicotianae (strain ATCC BAA-1114 / GMI1000) (Ralstonia solanacearum).